A 501-amino-acid polypeptide reads, in one-letter code: Ribose import ATP-binding protein RbsA (501 aa).

ABC transporter domains follow at residues L6–K242 and V253–K495. Position 38 to 45 (G38 to S45) interacts with ATP.

It belongs to the ABC transporter superfamily. Ribose importer (TC 3.A.1.2.1) family. The complex is composed of an ATP-binding protein (RbsA), two transmembrane proteins (RbsC) and a solute-binding protein (RbsB).

It localises to the cell inner membrane. The enzyme catalyses D-ribose(out) + ATP + H2O = D-ribose(in) + ADP + phosphate + H(+). Part of the ABC transporter complex RbsABC involved in ribose import. Responsible for energy coupling to the transport system. This Vibrio vulnificus (strain CMCP6) protein is Ribose import ATP-binding protein RbsA.